The primary structure comprises 179 residues: MAEQTTLARPYAKAVFELTKDAKTRNTWSKRLQALGTVAADDQVAALVGNPRVSREQLIGLLLDAVGEDTLGQEGKNLVQLLADNGRLGLLPEIAALYEHLRAEAEGVVDVQVTSASKLTKEQQDQIAGALKKRLGRKVRLHCRTDEALIGGALIQAGDLTIDGSVRGKLARLSSAMAH.

The protein belongs to the ATPase delta chain family. F-type ATPases have 2 components, F(1) - the catalytic core - and F(0) - the membrane proton channel. F(1) has five subunits: alpha(3), beta(3), gamma(1), delta(1), epsilon(1). F(0) has three main subunits: a(1), b(2) and c(10-14). The alpha and beta chains form an alternating ring which encloses part of the gamma chain. F(1) is attached to F(0) by a central stalk formed by the gamma and epsilon chains, while a peripheral stalk is formed by the delta and b chains.

It is found in the cell inner membrane. Its function is as follows. F(1)F(0) ATP synthase produces ATP from ADP in the presence of a proton or sodium gradient. F-type ATPases consist of two structural domains, F(1) containing the extramembraneous catalytic core and F(0) containing the membrane proton channel, linked together by a central stalk and a peripheral stalk. During catalysis, ATP synthesis in the catalytic domain of F(1) is coupled via a rotary mechanism of the central stalk subunits to proton translocation. Functionally, this protein is part of the stalk that links CF(0) to CF(1). It either transmits conformational changes from CF(0) to CF(1) or is implicated in proton conduction. The sequence is that of ATP synthase subunit delta from Alkalilimnicola ehrlichii (strain ATCC BAA-1101 / DSM 17681 / MLHE-1).